Reading from the N-terminus, the 312-residue chain is MTKIIFMGTPAFSVPILEQLASTYDVIAVVTQPDRPVGRKRILTPPPVKKAALELAIPVFQPEKLRTSSELNELIALEADLLVTAAYGQILPNSLLESPKHGAINVHASLLPEYRGGAPVHYALLDGKTETGVTIMYMVEKLDAGDMISQRKIPITEADNTGTMFDKLSKLGAELLMDTLPDFLAGKITAIAQDPEKVTFARNISREQEKIDWTQPGRTIFNQIRGLSPWPVAYTTLEEKPFKIWEATYDDTKVEGEPGTILMDKTSLKIIAGDGTLIVPTVIQPAGKPKMDVHSFMSGAGRNLSKSTRFGE.

Residue 109–112 (SLLP) coordinates (6S)-5,6,7,8-tetrahydrofolate.

The protein belongs to the Fmt family.

The catalysed reaction is L-methionyl-tRNA(fMet) + (6R)-10-formyltetrahydrofolate = N-formyl-L-methionyl-tRNA(fMet) + (6S)-5,6,7,8-tetrahydrofolate + H(+). Its function is as follows. Attaches a formyl group to the free amino group of methionyl-tRNA(fMet). The formyl group appears to play a dual role in the initiator identity of N-formylmethionyl-tRNA by promoting its recognition by IF2 and preventing the misappropriation of this tRNA by the elongation apparatus. This Listeria welshimeri serovar 6b (strain ATCC 35897 / DSM 20650 / CCUG 15529 / CIP 8149 / NCTC 11857 / SLCC 5334 / V8) protein is Methionyl-tRNA formyltransferase.